The sequence spans 315 residues: Acetyl-coenzyme A carboxylase carboxyl transferase subunit alpha (315 aa).

The 258-residue stretch at 32-289 (EIDLLEASLE…KQAFVDQLEQ (258 aa)) folds into the CoA carboxyltransferase C-terminal domain.

Belongs to the AccA family. As to quaternary structure, acetyl-CoA carboxylase is a heterohexamer composed of biotin carboxyl carrier protein (AccB), biotin carboxylase (AccC) and two subunits each of ACCase subunit alpha (AccA) and ACCase subunit beta (AccD).

It localises to the cytoplasm. The catalysed reaction is N(6)-carboxybiotinyl-L-lysyl-[protein] + acetyl-CoA = N(6)-biotinyl-L-lysyl-[protein] + malonyl-CoA. The protein operates within lipid metabolism; malonyl-CoA biosynthesis; malonyl-CoA from acetyl-CoA: step 1/1. Functionally, component of the acetyl coenzyme A carboxylase (ACC) complex. First, biotin carboxylase catalyzes the carboxylation of biotin on its carrier protein (BCCP) and then the CO(2) group is transferred by the carboxyltransferase to acetyl-CoA to form malonyl-CoA. The polypeptide is Acetyl-coenzyme A carboxylase carboxyl transferase subunit alpha (Staphylococcus haemolyticus (strain JCSC1435)).